The sequence spans 343 residues: MREPGFWYRPPSLLSSLLRPLGAIYGAVAAHRMAQPGTAVGVPVLCIGNFHGGGAGKTPTALALARLLLELGERPVVLSRGYGGRLHGPVSVDPGRHGAADVGDEPLMMARDIPVVVARDRVAGAALARSRGASVILMDDGFQNPAVAKDAALIVIDGDRGLGNGYVIPAGPLRAPLPPQLARTDALIVVGRGRAADPVAAAVKDNGGLLLRARFLPAEASLAALCDRPVLAFAGIGDPARFFATLRTAGINVAAERVFADHHPYAKQDLAGLTEIAGRDGFTLVTTEKDLARLRSDPAHAAFARSVVPFAVTLEFDDAKALRDFVIEKLTQARDKHRRAGRS.

Residue 51-58 coordinates ATP; that stretch reads HGGGAGKT.

This sequence belongs to the LpxK family.

It catalyses the reaction a lipid A disaccharide + ATP = a lipid IVA + ADP + H(+). Its pathway is glycolipid biosynthesis; lipid IV(A) biosynthesis; lipid IV(A) from (3R)-3-hydroxytetradecanoyl-[acyl-carrier-protein] and UDP-N-acetyl-alpha-D-glucosamine: step 6/6. In terms of biological role, transfers the gamma-phosphate of ATP to the 4'-position of a tetraacyldisaccharide 1-phosphate intermediate (termed DS-1-P) to form tetraacyldisaccharide 1,4'-bis-phosphate (lipid IVA). This Rhodopseudomonas palustris (strain BisB18) protein is Tetraacyldisaccharide 4'-kinase.